Reading from the N-terminus, the 198-residue chain is GTP-binding protein Di-Ras1 (198 aa).

Residues 17-22, 33-39, 61-65, 121-125, Ala-151, and 151-152 contribute to the GTP site; these read GVGKSS, RDTYIPT, DTTGS, NKCDE, and AK. The Effector region signature appears at 36–44; that stretch reads YIPTIEDTY. A compositionally biased stretch (basic and acidic residues) spans 178 to 192; sequence DGKRSGKQKRTDRVK. The tract at residues 178-198 is disordered; the sequence is DGKRSGKQKRTDRVKGKCTLM. Cys-195 is subject to Cysteine methyl ester. Residue Cys-195 is the site of S-geranylgeranyl cysteine attachment. A propeptide spans 196–198 (removed in mature form); sequence TLM.

It belongs to the small GTPase superfamily. Di-Ras family. Highly expressed in heart and brain.

Its subcellular location is the cell membrane. Its function is as follows. Displays low GTPase activity and exists predominantly in the GTP-bound form. This chain is GTP-binding protein Di-Ras1 (DIRAS1), found in Homo sapiens (Human).